The chain runs to 100 residues: Large ribosomal subunit protein bL21 (100 aa).

The protein belongs to the bacterial ribosomal protein bL21 family. In terms of assembly, part of the 50S ribosomal subunit. Contacts protein L20.

In terms of biological role, this protein binds to 23S rRNA in the presence of protein L20. In Ureaplasma parvum serovar 3 (strain ATCC 27815 / 27 / NCTC 11736), this protein is Large ribosomal subunit protein bL21.